The primary structure comprises 96 residues: Aspartyl/glutamyl-tRNA(Asn/Gln) amidotransferase subunit C (96 aa).

The protein belongs to the GatC family. Heterotrimer of A, B and C subunits.

It catalyses the reaction L-glutamyl-tRNA(Gln) + L-glutamine + ATP + H2O = L-glutaminyl-tRNA(Gln) + L-glutamate + ADP + phosphate + H(+). It carries out the reaction L-aspartyl-tRNA(Asn) + L-glutamine + ATP + H2O = L-asparaginyl-tRNA(Asn) + L-glutamate + ADP + phosphate + 2 H(+). Functionally, allows the formation of correctly charged Asn-tRNA(Asn) or Gln-tRNA(Gln) through the transamidation of misacylated Asp-tRNA(Asn) or Glu-tRNA(Gln) in organisms which lack either or both of asparaginyl-tRNA or glutaminyl-tRNA synthetases. The reaction takes place in the presence of glutamine and ATP through an activated phospho-Asp-tRNA(Asn) or phospho-Glu-tRNA(Gln). This is Aspartyl/glutamyl-tRNA(Asn/Gln) amidotransferase subunit C from Chloroflexus aurantiacus (strain ATCC 29366 / DSM 635 / J-10-fl).